A 303-amino-acid chain; its full sequence is Pseudouridine-5'-phosphate glycosidase (303 aa).

Residue Glu26 is the Proton donor of the active site. Residues Lys87 and Val107 each coordinate substrate. Asp139 is a binding site for Mn(2+). A substrate-binding site is contributed by 141-143 (SAD). Lys160 functions as the Nucleophile in the catalytic mechanism.

It belongs to the pseudouridine-5'-phosphate glycosidase family. As to quaternary structure, homotrimer. The cofactor is Mn(2+).

It carries out the reaction D-ribose 5-phosphate + uracil = psi-UMP + H2O. Its function is as follows. Catalyzes the reversible cleavage of pseudouridine 5'-phosphate (PsiMP) to ribose 5-phosphate and uracil. Functions biologically in the cleavage direction, as part of a pseudouridine degradation pathway. The protein is Pseudouridine-5'-phosphate glycosidase of Saccharopolyspora erythraea (strain ATCC 11635 / DSM 40517 / JCM 4748 / NBRC 13426 / NCIMB 8594 / NRRL 2338).